The chain runs to 200 residues: Large ribosomal subunit protein uL4 (200 aa).

The disordered stretch occupies residues 42–65 (TRAQKTRSEVSGGGAKPWRQKGTG).

Belongs to the universal ribosomal protein uL4 family. Part of the 50S ribosomal subunit.

One of the primary rRNA binding proteins, this protein initially binds near the 5'-end of the 23S rRNA. It is important during the early stages of 50S assembly. It makes multiple contacts with different domains of the 23S rRNA in the assembled 50S subunit and ribosome. Its function is as follows. Forms part of the polypeptide exit tunnel. The polypeptide is Large ribosomal subunit protein uL4 (Vibrio campbellii (strain ATCC BAA-1116)).